A 349-amino-acid polypeptide reads, in one-letter code: UPF0324 inner membrane protein YeiH (349 aa).

The Periplasmic segment spans residues 1–12 (MTELTLQNHCRT). The helical transmembrane segment at 13 to 35 (MWHFIPGLALSAVITGVALWGGA) threads the bilayer. At 36 to 38 (IPA) the chain is on the cytoplasmic side. Residues 39-61 (VAGAGFSALTLAILLGMVIGNTI) traverse the membrane as a helical segment. At 62–99 (YPQIWKQCDGGVLFAKQHLLRLGIILYGFRLTFSQIAD) the chain is on the periplasmic side. A helical transmembrane segment spans residues 100-122 (VGISGIVIDVLTLSSTFMLACFL). Residues 123 to 131 (GQKVFGLDR) are Cytoplasmic-facing. Residues 132–151 (HTSWLIGAGSSICGAAAVLA) form a helical membrane-spanning segment. The Periplasmic portion of the chain corresponds to 152–162 (TEPVVKAEASK). Residues 163–185 (VTVAVATVVIFGTIAIFLYPAMY) form a helical membrane-spanning segment. Residues 186 to 261 (PLLAHWFSPE…SPATGAEKSK (76 aa)) lie on the Cytoplasmic side of the membrane. A helical transmembrane segment spans residues 262-284 (ITIPWFAIFFIVVAIFNSFHLLP). Topologically, residues 285-290 (KAVVDM) are periplasmic. Residues 291–313 (LVTLDTVLLAMAMAALGLTTHVS) form a helical membrane-spanning segment. Residues 314 to 322 (ALKKAGAKP) are Cytoplasmic-facing. A helical membrane pass occupies residues 323–345 (LLMALALFAWLIIGGGAINVLIH). At 346-349 (SLIA) the chain is on the periplasmic side.

The protein belongs to the UPF0324 family.

The protein resides in the cell inner membrane. This chain is UPF0324 inner membrane protein YeiH (yeiH), found in Salmonella typhimurium (strain LT2 / SGSC1412 / ATCC 700720).